A 450-amino-acid polypeptide reads, in one-letter code: Glycerol dehydrogenase 1 (450 aa).

NAD(+) is bound by residues Asp99, 155 to 159, and 177 to 180; these read GKTMD and TTAS. A substrate-binding site is contributed by Asp182. Residues Ser186, Leu188, and Tyr192 each coordinate NAD(+). Positions 232, 315, and 333 each coordinate substrate. Residues Asp232, His315, and His333 each coordinate Zn(2+).

The protein belongs to the iron-containing alcohol dehydrogenase family. Zn(2+) is required as a cofactor.

The protein localises to the mitochondrion. The catalysed reaction is glycerol + NAD(+) = dihydroxyacetone + NADH + H(+). The protein operates within polyol metabolism; glycerol fermentation; glycerone phosphate from glycerol (oxidative route): step 1/2. Its function is as follows. Glycerol dehydrogenase involved in the assimilation of glycerol. This is Glycerol dehydrogenase 1 (gld1) from Schizosaccharomyces pombe (strain 972 / ATCC 24843) (Fission yeast).